Here is a 611-residue protein sequence, read N- to C-terminus: Phosphomethylpyrimidine synthase (611 aa).

Substrate-binding positions include N218, M247, Y276, H312, S332 to G334, D373 to R376, and E412. H416 serves as a coordination point for Zn(2+). A substrate-binding site is contributed by Y439. H480 contributes to the Zn(2+) binding site. Residues C560, C563, and C568 each coordinate [4Fe-4S] cluster.

This sequence belongs to the ThiC family. As to quaternary structure, homodimer. [4Fe-4S] cluster is required as a cofactor.

The catalysed reaction is 5-amino-1-(5-phospho-beta-D-ribosyl)imidazole + S-adenosyl-L-methionine = 4-amino-2-methyl-5-(phosphooxymethyl)pyrimidine + CO + 5'-deoxyadenosine + formate + L-methionine + 3 H(+). It functions in the pathway cofactor biosynthesis; thiamine diphosphate biosynthesis. In terms of biological role, catalyzes the synthesis of the hydroxymethylpyrimidine phosphate (HMP-P) moiety of thiamine from aminoimidazole ribotide (AIR) in a radical S-adenosyl-L-methionine (SAM)-dependent reaction. This chain is Phosphomethylpyrimidine synthase, found in Caulobacter sp. (strain K31).